A 467-amino-acid polypeptide reads, in one-letter code: Dihydrolipoyl dehydrogenase 3 (467 aa).

FAD is bound by residues 34-43 (EGRETLGGTC), Lys-52, and Ala-116. Cys-43 and Cys-48 are oxidised to a cystine. NAD(+) is bound by residues 182–186 (GAGVI), Glu-205, Val-239, and 272–275 (AIGR). The FAD site is built by Asp-314 and Ala-322. Residue His-446 is the Proton acceptor of the active site.

This sequence belongs to the class-I pyridine nucleotide-disulfide oxidoreductase family. Homodimer. Requires FAD as cofactor.

Its subcellular location is the cytoplasm. It catalyses the reaction N(6)-[(R)-dihydrolipoyl]-L-lysyl-[protein] + NAD(+) = N(6)-[(R)-lipoyl]-L-lysyl-[protein] + NADH + H(+). LPD-3 may substitute for lipoamide dehydrogenase of the 2-oxoglutarate dehydrogenase and pyruvate multienzyme complexes when the latter is inactive or missing. This chain is Dihydrolipoyl dehydrogenase 3 (lpd3), found in Pseudomonas aeruginosa (strain ATCC 15692 / DSM 22644 / CIP 104116 / JCM 14847 / LMG 12228 / 1C / PRS 101 / PAO1).